Consider the following 138-residue polypeptide: Large ribosomal subunit protein uL16 (138 aa).

Positions 1–13 are enriched in basic residues; that stretch reads MLQPKRRKYRKEQ. A disordered region spans residues 1–24; sequence MLQPKRRKYRKEQKGRNTGKATRG.

It belongs to the universal ribosomal protein uL16 family. In terms of assembly, part of the 50S ribosomal subunit.

Functionally, binds 23S rRNA and is also seen to make contacts with the A and possibly P site tRNAs. The protein is Large ribosomal subunit protein uL16 of Cupriavidus necator (strain ATCC 17699 / DSM 428 / KCTC 22496 / NCIMB 10442 / H16 / Stanier 337) (Ralstonia eutropha).